We begin with the raw amino-acid sequence, 385 residues long: UDP-4-amino-4-deoxy-L-arabinose--oxoglutarate aminotransferase (385 aa).

Residue Lys-188 is modified to N6-(pyridoxal phosphate)lysine.

This sequence belongs to the DegT/DnrJ/EryC1 family. ArnB subfamily. As to quaternary structure, homodimer. Pyridoxal 5'-phosphate is required as a cofactor.

It carries out the reaction UDP-4-amino-4-deoxy-beta-L-arabinose + 2-oxoglutarate = UDP-beta-L-threo-pentopyranos-4-ulose + L-glutamate. It functions in the pathway nucleotide-sugar biosynthesis; UDP-4-deoxy-4-formamido-beta-L-arabinose biosynthesis; UDP-4-deoxy-4-formamido-beta-L-arabinose from UDP-alpha-D-glucuronate: step 2/3. The protein operates within bacterial outer membrane biogenesis; lipopolysaccharide biosynthesis. Functionally, catalyzes the conversion of UDP-4-keto-arabinose (UDP-Ara4O) to UDP-4-amino-4-deoxy-L-arabinose (UDP-L-Ara4N). The modified arabinose is attached to lipid A and is required for resistance to polymyxin and cationic antimicrobial peptides. The polypeptide is UDP-4-amino-4-deoxy-L-arabinose--oxoglutarate aminotransferase (arnB) (Escherichia coli (strain K12)).